The sequence spans 146 residues: Urease accessory protein UreE 1 (146 aa).

This sequence belongs to the UreE family.

Its subcellular location is the cytoplasm. Involved in urease metallocenter assembly. Binds nickel. Probably functions as a nickel donor during metallocenter assembly. This chain is Urease accessory protein UreE 1, found in Pseudomonas syringae pv. syringae (strain B728a).